We begin with the raw amino-acid sequence, 273 residues long: NADPH-dependent 7-cyano-7-deazaguanine reductase (273 aa).

81-83 (VES) lines the substrate pocket. 83–84 (SK) is an NADPH binding site. Cys179 (thioimide intermediate) is an active-site residue. The active-site Proton donor is Asp186. 218-219 (AE) is a substrate binding site. 247–248 (RG) is an NADPH binding site.

It belongs to the GTP cyclohydrolase I family. QueF type 2 subfamily. Homodimer.

It localises to the cytoplasm. It carries out the reaction 7-aminomethyl-7-carbaguanine + 2 NADP(+) = 7-cyano-7-deazaguanine + 2 NADPH + 3 H(+). It participates in tRNA modification; tRNA-queuosine biosynthesis. In terms of biological role, catalyzes the NADPH-dependent reduction of 7-cyano-7-deazaguanine (preQ0) to 7-aminomethyl-7-deazaguanine (preQ1). The sequence is that of NADPH-dependent 7-cyano-7-deazaguanine reductase from Rickettsia akari (strain Hartford).